Consider the following 268-residue polypeptide: 3-methyl-2-oxobutanoate hydroxymethyltransferase (268 aa).

Mg(2+) contacts are provided by D44 and D83. 3-methyl-2-oxobutanoate-binding positions include 44 to 45, D83, and K113; that span reads DS. Mg(2+) is bound at residue E115. E183 functions as the Proton acceptor in the catalytic mechanism.

Belongs to the PanB family. In terms of assembly, homodecamer; pentamer of dimers. Requires Mg(2+) as cofactor.

Its subcellular location is the cytoplasm. The catalysed reaction is 3-methyl-2-oxobutanoate + (6R)-5,10-methylene-5,6,7,8-tetrahydrofolate + H2O = 2-dehydropantoate + (6S)-5,6,7,8-tetrahydrofolate. It functions in the pathway cofactor biosynthesis; (R)-pantothenate biosynthesis; (R)-pantoate from 3-methyl-2-oxobutanoate: step 1/2. Functionally, catalyzes the reversible reaction in which hydroxymethyl group from 5,10-methylenetetrahydrofolate is transferred onto alpha-ketoisovalerate to form ketopantoate. The sequence is that of 3-methyl-2-oxobutanoate hydroxymethyltransferase from Leptospira biflexa serovar Patoc (strain Patoc 1 / Ames).